The primary structure comprises 654 residues: Probable Xaa-Pro aminopeptidase P (654 aa).

Mn(2+) is bound by residues aspartate 451, aspartate 462, glutamate 560, and glutamate 574.

It belongs to the peptidase M24B family. The cofactor is Mn(2+).

It carries out the reaction Release of any N-terminal amino acid, including proline, that is linked to proline, even from a dipeptide or tripeptide.. In terms of biological role, catalyzes the removal of a penultimate prolyl residue from the N-termini of peptides. In Botryotinia fuckeliana (strain B05.10) (Noble rot fungus), this protein is Probable Xaa-Pro aminopeptidase P (ampp).